We begin with the raw amino-acid sequence, 369 residues long: Transcription factor GTE6 (369 aa).

Residues 89-198 form the Bromo domain; the sequence is KRMQDLMRQF…EKFEEKWAHF (110 aa). The stretch at 201–263 forms a coiled coil; that stretch reads KVQEEEKIRE…VERCRKITIE (63 aa). An NET domain is found at 250-331; sequence MRKVVERCRK…DALDNAMKKK (82 aa). Residues 329 to 348 are compositionally biased toward basic and acidic residues; it reads KKKKEEETKTRELSGAQKKE. A disordered region spans residues 329–369; it reads KKKKEEETKTRELSGAQKKEVSKKRNATTKLAERKTKRSRI. The short motif at 351-368 is the Bipartite nuclear localization signal element; the sequence is KKRNATTKLAERKTKRSR.

In terms of tissue distribution, abundantly expressed in flowers. Weakly expressed in roots, leaves and siliques; and undetectable in 5-day-old seedlings. In the basal rosette leaves of 21-day-old plants, it is more abundant in leaves 6 and 7, which possess narrow elliptical laminae, than in leaves 1-4, which have round laminae, suggesting a possible correlation between its expression and the formation of elliptical leaf laminae in mature leaves.

It localises to the nucleus. Functionally, regulates differences in leaf patterning between juvenile and mature leaves by controlling differences in the development of primordia produced during juvenile and mature phases. Acts by activating transcription of the myb-domain protein AS1, a gene involved in leaf-axis specification. Associates with the promoter and the start of the transcribed region of AS1 and up-regulates expression of AS1 through acetylation of histones H3 and H4. The sequence is that of Transcription factor GTE6 (GTE6) from Arabidopsis thaliana (Mouse-ear cress).